A 401-amino-acid chain; its full sequence is uncharacterized protein (401 aa).

K242 carries the post-translational modification N6-(pyridoxal phosphate)lysine.

It belongs to the class-I pyridoxal-phosphate-dependent aminotransferase family. Homodimer. It depends on pyridoxal 5'-phosphate as a cofactor.

Its subcellular location is the cytoplasm. This is an uncharacterized protein from Saccharolobus solfataricus (strain ATCC 35092 / DSM 1617 / JCM 11322 / P2) (Sulfolobus solfataricus).